A 129-amino-acid chain; its full sequence is Large ribosomal subunit protein bL17 (129 aa).

The protein belongs to the bacterial ribosomal protein bL17 family. Part of the 50S ribosomal subunit. Contacts protein L32.

The chain is Large ribosomal subunit protein bL17 from Pasteurella multocida (strain Pm70).